A 208-amino-acid polypeptide reads, in one-letter code: Imidazoleglycerol-phosphate dehydratase (208 aa).

Belongs to the imidazoleglycerol-phosphate dehydratase family.

The protein resides in the cytoplasm. It catalyses the reaction D-erythro-1-(imidazol-4-yl)glycerol 3-phosphate = 3-(imidazol-4-yl)-2-oxopropyl phosphate + H2O. Its pathway is amino-acid biosynthesis; L-histidine biosynthesis; L-histidine from 5-phospho-alpha-D-ribose 1-diphosphate: step 6/9. The polypeptide is Imidazoleglycerol-phosphate dehydratase (Arthrobacter sp. (strain FB24)).